Reading from the N-terminus, the 276-residue chain is Putative glycosyltransferase 6 domain-containing protein 1 (276 aa).

Topologically, residues Met1–Met6 are cytoplasmic. The chain crosses the membrane as a helical; Signal-anchor for type II membrane protein span at residues Leu7 to Phe23. The Lumenal portion of the chain corresponds to Arg24–Thr276. Asn74 carries an N-linked (GlcNAc...) asparagine glycan. Residues Phe82 to Phe87, Ala173 to Asn175, and His195 to Trp198 each bind substrate. Glu263 functions as the Nucleophile in the catalytic mechanism.

The protein belongs to the glycosyltransferase 6 family. The cofactor is Mn(2+). Expressed in both healthy and inflamed gingival tissue samples at similar levels, with higher expression in the gingival connective tissue compared to gingival epithelium. Strongest expression in testis, followed by leukocytes.

The protein resides in the membrane. In Homo sapiens (Human), this protein is Putative glycosyltransferase 6 domain-containing protein 1 (GLT6D1).